The chain runs to 126 residues: Adenosine 5'-monophosphoramidase HINT1 (126 aa).

A2 carries the post-translational modification N-acetylalanine. An HIT domain is found at 18–126 (IFGKIIRKEI…GGRQMNWPPG (109 aa)). N6-acetyllysine is present on residues K21 and K30. 43 to 44 (DI) serves as a coordination point for AMP. S45 and S72 each carry phosphoserine. AMP is bound by residues N99, 105–107 (GQS), and 112–114 (HLH). A Histidine triad motif motif is present at residues 110-114 (HVHLH). H112 acts as the Tele-AMP-histidine intermediate in catalysis.

Belongs to the HINT family. Homodimer. Interacts with CDK7. Interacts with RUVBL1 and RUVBL2 and is associated with the LEF1/TCF1-CTNNB1 complex and with a KAT5 histone acetyltransferase complex. Identified in a complex with MITF and CTNNB1. Interacts with CDC34 and RBX1, and is part of a SCF (SKP2-CUL1-F-box protein) E3 ubiquitin-protein ligase complex. Interacts with SUMO1, SUMO2 and RGS17. Interacts with the Ten-1 ICD form of TENM1. Interacts with CALM1; interaction increases in the presence of calcium ions. Widely expressed.

Its subcellular location is the cytoplasm. The protein localises to the nucleus. It catalyses the reaction adenosine 5'-phosphoramidate + H2O = AMP + NH4(+). Its function is as follows. Exhibits adenosine 5'-monophosphoramidase activity, hydrolyzing purine nucleotide phosphoramidates with a single phosphate group such as adenosine 5'monophosphoramidate (AMP-NH2) to yield AMP and NH2. Hydrolyzes adenosine 5'monophosphomorpholidate (AMP-morpholidate) and guanosine 5'monophosphomorpholidate (GMP-morpholidate). Hydrolyzes lysyl-AMP (AMP-N-epsilon-(N-alpha-acetyl lysine methyl ester)) generated by lysine tRNA ligase. Hydrolyzes Met-AMP, His-AMP, Asp-AMP, lysyl-GMP (GMP-N-epsilon-(N-alpha-acetyl lysine methyl ester)) and AMP-N-alanine methyl ester. Can also convert adenosine 5'-O-phosphorothioate and guanosine 5'-O-phosphorothioate to the corresponding nucleoside 5'-O-phosphates with concomitant release of hydrogen sulfide. In addition, functions as a scaffolding protein that modulates transcriptional activation by the LEF1/TCF1-CTNNB1 complex and by the complex formed with MITF and CTNNB1. Modulates p53/TP53 levels and p53/TP53-mediated apoptosis. Modulates proteasomal degradation of target proteins by the SCF (SKP2-CUL1-F-box protein) E3 ubiquitin-protein ligase complex. Also exhibits SUMO-specific isopeptidase activity, deconjugating SUMO1 from RANGAP1 and RGS17. This is Adenosine 5'-monophosphoramidase HINT1 (HINT1) from Oryctolagus cuniculus (Rabbit).